The sequence spans 433 residues: Trigger factor (433 aa).

The 86-residue stretch at Glu-161–Pro-246 folds into the PPIase FKBP-type domain.

This sequence belongs to the FKBP-type PPIase family. Tig subfamily.

It localises to the cytoplasm. It carries out the reaction [protein]-peptidylproline (omega=180) = [protein]-peptidylproline (omega=0). Involved in protein export. Acts as a chaperone by maintaining the newly synthesized protein in an open conformation. Functions as a peptidyl-prolyl cis-trans isomerase. The protein is Trigger factor of Actinobacillus pleuropneumoniae serotype 7 (strain AP76).